The sequence spans 177 residues: ATP synthase subunit delta (177 aa).

Belongs to the ATPase delta chain family. F-type ATPases have 2 components, F(1) - the catalytic core - and F(0) - the membrane proton channel. F(1) has five subunits: alpha(3), beta(3), gamma(1), delta(1), epsilon(1). F(0) has three main subunits: a(1), b(2) and c(10-14). The alpha and beta chains form an alternating ring which encloses part of the gamma chain. F(1) is attached to F(0) by a central stalk formed by the gamma and epsilon chains, while a peripheral stalk is formed by the delta and b chains.

It localises to the cell inner membrane. Its function is as follows. F(1)F(0) ATP synthase produces ATP from ADP in the presence of a proton or sodium gradient. F-type ATPases consist of two structural domains, F(1) containing the extramembraneous catalytic core and F(0) containing the membrane proton channel, linked together by a central stalk and a peripheral stalk. During catalysis, ATP synthesis in the catalytic domain of F(1) is coupled via a rotary mechanism of the central stalk subunits to proton translocation. Functionally, this protein is part of the stalk that links CF(0) to CF(1). It either transmits conformational changes from CF(0) to CF(1) or is implicated in proton conduction. This chain is ATP synthase subunit delta, found in Escherichia coli O81 (strain ED1a).